Here is a 177-residue protein sequence, read N- to C-terminus: Large ribosomal subunit protein uL6 (177 aa).

This sequence belongs to the universal ribosomal protein uL6 family. As to quaternary structure, part of the 50S ribosomal subunit.

Its function is as follows. This protein binds to the 23S rRNA, and is important in its secondary structure. It is located near the subunit interface in the base of the L7/L12 stalk, and near the tRNA binding site of the peptidyltransferase center. This is Large ribosomal subunit protein uL6 from Ralstonia pickettii (strain 12J).